Reading from the N-terminus, the 62-residue chain is Large ribosomal subunit protein uL30 (62 aa).

The protein belongs to the universal ribosomal protein uL30 family. As to quaternary structure, part of the 50S ribosomal subunit.

The sequence is that of Large ribosomal subunit protein uL30 from Geobacillus kaustophilus (strain HTA426).